The following is a 116-amino-acid chain: MKIRKSILAGTLAIVLASPLVTNLDKNEAQASTSLPTSNEYQNEKLANELKSLLDELNVNELATGSLNTYYKRTIKISGQKAMYALKSKDFKKMSEAKYQLQKIYNEIDEALKSKY.

Positions 1-31 are cleaved as a signal peptide; sequence MKIRKSILAGTLAIVLASPLVTNLDKNEAQA. The tract at residues 62–79 is essential for activity; sequence LATGSLNTYYKRTIKISG.

This sequence belongs to the SCIN family.

It localises to the secreted. Its function is as follows. Involved in countering the first line of host defense mechanisms. Efficiently inhibits opsonization, phagocytosis and killing of S.aureus by human neutrophils. Acts by binding and stabilizing human C3 convertases (C4b2a and C3bBb), leading to their inactivation. The convertases are no longer able to cleave complement C3, therefore preventing further C3b deposition on the bacterial surface and phagocytosis of the bacterium. Also prevents C5a-induced neutrophil responses. In Staphylococcus aureus (strain Mu50 / ATCC 700699), this protein is Staphylococcal complement inhibitor (scn).